A 183-amino-acid polypeptide reads, in one-letter code: uncharacterized protein (183 aa).

The signal sequence occupies residues 1-23 (MSAFKKSLLVAGVAMILSNNVFA). A disulfide bridge links cysteine 41 with cysteine 80.

The protein belongs to the fimbrial protein family.

The protein localises to the fimbrium. This is an uncharacterized protein from Escherichia coli (strain K12).